The sequence spans 260 residues: MLAKRIIPCLDVDNGRVVKGVQFVDIKDAGDPVEVAKRYNEQGADEITFLDITATSDERDTTYHTVERMAETVFVPLTVGGGVRKIADIRNLLNAGADKVAINSAAVFTPEFVGEAAQKFGNQCIVVAIDAKRVADIEVDGIIMPRWEIFTHGGRKPTGIDAVAWARKMAELGAGELLVTSMDGDGTKKGYDLALMKQITSRVNVPVIASGGVGNLQHLAEGVLEGGVDAVLAASIFHFGEYTVQEAKAYMAAQGIQMRL.

Residues aspartate 11 and aspartate 130 contribute to the active site.

Belongs to the HisA/HisF family. As to quaternary structure, heterodimer of HisH and HisF.

It is found in the cytoplasm. The catalysed reaction is 5-[(5-phospho-1-deoxy-D-ribulos-1-ylimino)methylamino]-1-(5-phospho-beta-D-ribosyl)imidazole-4-carboxamide + L-glutamine = D-erythro-1-(imidazol-4-yl)glycerol 3-phosphate + 5-amino-1-(5-phospho-beta-D-ribosyl)imidazole-4-carboxamide + L-glutamate + H(+). It functions in the pathway amino-acid biosynthesis; L-histidine biosynthesis; L-histidine from 5-phospho-alpha-D-ribose 1-diphosphate: step 5/9. Its function is as follows. IGPS catalyzes the conversion of PRFAR and glutamine to IGP, AICAR and glutamate. The HisF subunit catalyzes the cyclization activity that produces IGP and AICAR from PRFAR using the ammonia provided by the HisH subunit. This chain is Imidazole glycerol phosphate synthase subunit HisF, found in Psychrobacter arcticus (strain DSM 17307 / VKM B-2377 / 273-4).